Here is a 65-residue protein sequence, read N- to C-terminus: Protein translocase subunit SecE (65 aa).

A helical membrane pass occupies residues 44-64 (LVMAVVGLIAYIVQLTTSLII).

The protein belongs to the SecE/SEC61-gamma family. Component of the Sec protein translocase complex. Heterotrimer consisting of SecY (alpha), SecG (beta) and SecE (gamma) subunits. The heterotrimers can form oligomers, although 1 heterotrimer is thought to be able to translocate proteins. Interacts with the ribosome. May interact with SecDF, and other proteins may be involved.

The protein localises to the cell membrane. In terms of biological role, essential subunit of the Sec protein translocation channel SecYEG. Clamps together the 2 halves of SecY. May contact the channel plug during translocation. This chain is Protein translocase subunit SecE, found in Sulfolobus acidocaldarius (strain ATCC 33909 / DSM 639 / JCM 8929 / NBRC 15157 / NCIMB 11770).